The chain runs to 938 residues: Isoleucine--tRNA ligase (938 aa).

Residues 58 to 68 (PYANGSIHIGH) carry the 'HIGH' region motif. Lys183 bears the N6-acetyllysine mark. Glu561 lines the L-isoleucyl-5'-AMP pocket. A 'KMSKS' region motif is present at residues 602–606 (KMSKS). Lys605 is an ATP binding site. Cys901, Cys904, Cys921, and Cys924 together coordinate Zn(2+).

This sequence belongs to the class-I aminoacyl-tRNA synthetase family. IleS type 1 subfamily. In terms of assembly, monomer. It depends on Zn(2+) as a cofactor.

The protein resides in the cytoplasm. The catalysed reaction is tRNA(Ile) + L-isoleucine + ATP = L-isoleucyl-tRNA(Ile) + AMP + diphosphate. Its function is as follows. Catalyzes the attachment of isoleucine to tRNA(Ile). As IleRS can inadvertently accommodate and process structurally similar amino acids such as valine, to avoid such errors it has two additional distinct tRNA(Ile)-dependent editing activities. One activity is designated as 'pretransfer' editing and involves the hydrolysis of activated Val-AMP. The other activity is designated 'posttransfer' editing and involves deacylation of mischarged Val-tRNA(Ile). The sequence is that of Isoleucine--tRNA ligase from Escherichia coli O45:K1 (strain S88 / ExPEC).